Here is a 745-residue protein sequence, read N- to C-terminus: Phosphoribosylformylglycinamidine synthase subunit PurL (745 aa).

Residue histidine 47 is part of the active site. Residues tyrosine 50 and lysine 90 each contribute to the ATP site. Glutamate 92 contacts Mg(2+). Residues 93–96 and arginine 115 contribute to the substrate site; that span reads SHNH. Histidine 94 acts as the Proton acceptor in catalysis. A Mg(2+)-binding site is contributed by aspartate 116. Residue glutamine 240 coordinates substrate. Position 268 (aspartate 268) interacts with Mg(2+). 312-314 is a substrate binding site; that stretch reads ESQ. Residues asparagine 501 and glycine 538 each contribute to the ATP site. Asparagine 539 contacts Mg(2+). Serine 541 provides a ligand contact to substrate.

Belongs to the FGAMS family. Monomer. Part of the FGAM synthase complex composed of 1 PurL, 1 PurQ and 2 PurS subunits.

It is found in the cytoplasm. The enzyme catalyses N(2)-formyl-N(1)-(5-phospho-beta-D-ribosyl)glycinamide + L-glutamine + ATP + H2O = 2-formamido-N(1)-(5-O-phospho-beta-D-ribosyl)acetamidine + L-glutamate + ADP + phosphate + H(+). The protein operates within purine metabolism; IMP biosynthesis via de novo pathway; 5-amino-1-(5-phospho-D-ribosyl)imidazole from N(2)-formyl-N(1)-(5-phospho-D-ribosyl)glycinamide: step 1/2. Part of the phosphoribosylformylglycinamidine synthase complex involved in the purines biosynthetic pathway. Catalyzes the ATP-dependent conversion of formylglycinamide ribonucleotide (FGAR) and glutamine to yield formylglycinamidine ribonucleotide (FGAM) and glutamate. The FGAM synthase complex is composed of three subunits. PurQ produces an ammonia molecule by converting glutamine to glutamate. PurL transfers the ammonia molecule to FGAR to form FGAM in an ATP-dependent manner. PurS interacts with PurQ and PurL and is thought to assist in the transfer of the ammonia molecule from PurQ to PurL. The protein is Phosphoribosylformylglycinamidine synthase subunit PurL of Leptospira interrogans serogroup Icterohaemorrhagiae serovar Lai (strain 56601).